Here is a 96-residue protein sequence, read N- to C-terminus: SAGA complex subunit SUS1 (96 aa).

Lys-68 is covalently cross-linked (Glycyl lysine isopeptide (Lys-Gly) (interchain with G-Cter in ubiquitin)).

The protein belongs to the ENY2 family. Component of the 1.8 MDa SAGA (Spt-Ada-Gcn5 acetyltransferase) complex, which is composed of 19 subunits TRA1, SPT7, TAF5, NGG1/ADA3, SGF73, SPT20/ADA5, SPT8, TAF12, TAF6, HFI1/ADA1, UBP8, GCN5, ADA2, SPT3, SGF29, TAF10, TAF9, SGF11 and SUS1. The SAGA complex is composed of 4 modules, namely the HAT (histone acetyltransferase) module (GCN5, ADA2, NGG1/ADA3 and SGF29), the DUB (deubiquitinating) module (UBP8, SGF11, SGF73 and SUS1), the core or TAF (TBP-associated factor) module (TAF5, TAF6, TAF9, TAF10 and TAF12), and the Tra1 or SPT (Suppressor of Ty) module (TRA1, HFI1/ADA1, SPT3, SPT7, SPT8 and SPT20/ADA5). The Tra1/SPT module binds activators, the core module recruits TBP (TATA-binding protein), the HAT module contains the histone H3 acetyltransferase GCN5, and the DUB module comprises the histone H2B deubiquitinase UBP8. Also identified in an altered form of SAGA, named SALSA (SAGA altered, Spt8 absent) or SLIK (SAGA-like) complex, which contains a C-terminal truncated form of SPT7 and is missing SPT8. However, it has been shown that the SAGA and SAGA-like SALSA/SLIK transcriptional coactivators are structurally and biochemically equivalent. Component of the nuclear pore complex (NPC)-associated TREX-2 complex (transcription and export complex 2), composed of at least SUS1, SAC3, THP1, SEM1, and CDC31. TREX-2 contains 2 SUS1 chains. The TREX-2 complex interacts with the mRNA export factors MEX67, MTR2 and SUB2, and the nucleoporin NUP1. Interacts directly with THP1, SAC3. Interacts directly with SGF11 and UBP8. Interacts with YRA1, MEX67 and with the RNA polymerase II.

The protein localises to the nucleus. It is found in the nucleoplasm. It localises to the cytoplasm. The protein resides in the P-body. In terms of biological role, involved in mRNA export coupled transcription activation by association with both the TREX-2 and the SAGA complexes. SAGA acts as a general cofactor required for essentially all RNA polymerase II transcription. At the promoters, SAGA is required for transcription pre-initiation complex (PIC) recruitment. It influences RNA polymerase II transcriptional activity through different activities such as TBP interaction (via core/TAF module) and promoter selectivity, interaction with transcription activators (via Tra1/SPT module), and chromatin modification through histone acetylation (via HAT module) and deubiquitination (via DUB module). SAGA preferentially acetylates histones H3 (to form H3K9ac, H3K14ac, H3K18ac and H3K23ac) and H2B and deubiquitinates histone H2B. SAGA interacts with DNA via upstream activating sequences (UASs). Also identified in a modified version of SAGA named SALSA or SLIK. The cleavage of SPT7 and the absence of the SPT8 subunit in SLIK neither drive any major conformational differences in its structure compared with SAGA, nor significantly affect HAT, DUB, or DNA-binding activities. Within the SAGA complex, participates in a subcomplex with SGF11, SGF73 and UBP8 required for deubiquitination of H2B and for the maintenance of steady-state H3 methylation levels. The TREX-2 complex functions in docking export-competent ribonucleoprotein particles (mRNPs) to the nuclear entrance of the nuclear pore complex (nuclear basket), by association with components of the nuclear mRNA export machinery (MEX67-MTR2 and SUB2) in the nucleoplasm and the nucleoporin NUP1 at the nuclear basket. TREX-2 participates in mRNA export and accurate chromatin positioning in the nucleus by tethering genes to the nuclear periphery. SUS1 also has a role in mRNP biogenesis and maintenance of genome integrity through preventing RNA-mediated genome instability. Has a role in response to DNA damage induced by methyl methane sulfonate (MMS) and replication arrest induced by hydroxyurea. May also be involved in cytoplasmic mRNA decay by interaction with components of P-bodies. The chain is SAGA complex subunit SUS1 from Saccharomyces cerevisiae (strain ATCC 204508 / S288c) (Baker's yeast).